The chain runs to 201 residues: Glycerol-3-phosphate acyltransferase (201 aa).

Transmembrane regions (helical) follow at residues 10-30 (MLIG…GLIL), 60-80 (LAAA…LIAA), 86-106 (AAIA…WIGF), 116-136 (LGVL…AWIV), and 166-186 (ALAA…RANI).

This sequence belongs to the PlsY family. In terms of assembly, probably interacts with PlsX.

It localises to the cell inner membrane. The catalysed reaction is an acyl phosphate + sn-glycerol 3-phosphate = a 1-acyl-sn-glycero-3-phosphate + phosphate. The protein operates within lipid metabolism; phospholipid metabolism. Its function is as follows. Catalyzes the transfer of an acyl group from acyl-phosphate (acyl-PO(4)) to glycerol-3-phosphate (G3P) to form lysophosphatidic acid (LPA). This enzyme utilizes acyl-phosphate as fatty acyl donor, but not acyl-CoA or acyl-ACP. This chain is Glycerol-3-phosphate acyltransferase, found in Brucella abortus (strain 2308).